A 487-amino-acid chain; its full sequence is Probable cytochrome P450 516A1 (487 aa).

A helical transmembrane segment spans residues 1-21 (MIILLLSIIIFILYIVKIFKN). Position 434 (Cys-434) interacts with heme.

It belongs to the cytochrome P450 family. Heme is required as a cofactor.

It is found in the membrane. The chain is Probable cytochrome P450 516A1 (cyp516A1) from Dictyostelium discoideum (Social amoeba).